The sequence spans 497 residues: tRNA (adenine(58)-N(1))-methyltransferase non-catalytic subunit TRM6 (497 aa).

2 disordered regions span residues Met-1 to Ile-20 and Thr-69 to Asp-100. The segment covering Lys-79–Asp-100 has biased composition (basic and acidic residues). Position 94 to 104 (Asn-94 to Gln-104) interacts with substrate. A Phosphothreonine modification is found at Thr-107. Residues Lys-145–Tyr-154 and Arg-175–His-182 contribute to the substrate site. Residues Ser-276 to Arg-354 form a disordered region. Ser-298 and Ser-305 each carry phosphoserine. Basic and acidic residues predominate over residues Asp-327–Arg-354. Residues Arg-349, Arg-377, Arg-415 to Leu-423, and Gln-434 to His-441 contribute to the substrate site. A disordered region spans residues Ser-472–Ser-497. A compositionally biased stretch (basic and acidic residues) spans Glu-478 to Ser-497.

This sequence belongs to the TRM6/GCD10 family. In terms of assembly, heterotetramer; composed of two copies of TRMT6 and two copies of TRMT61A. Expressed in brain, liver, testis and ovary.

It is found in the nucleus. Functionally, substrate-binding subunit of tRNA (adenine-N(1)-)-methyltransferase, which catalyzes the formation of N(1)-methyladenine at position 58 (m1A58) in initiator methionyl-tRNA. Together with the TRMT61A catalytic subunit, part of a mRNA N(1)-methyltransferase complex that mediates methylation of adenosine residues at the N(1) position of a small subset of mRNAs: N(1) methylation takes place in tRNA T-loop-like structures of mRNAs and is only present at low stoichiometries. The protein is tRNA (adenine(58)-N(1))-methyltransferase non-catalytic subunit TRM6 (TRMT6) of Homo sapiens (Human).